Here is a 1365-residue protein sequence, read N- to C-terminus: Zinc finger protein 423 (1365 aa).

The segment covering 1 to 11 has biased composition (basic residues); sequence MSRRKQAKPRS. Residues 1–69 form a disordered region; that stretch reads MSRRKQAKPR…SHDERVGEED (69 aa). Basic and acidic residues predominate over residues 37–51; the sequence is VSERDSDRKESRAVG. The C2H2-type 1 zinc finger occupies 76 to 98; sequence FTCDNCQQDFECLADLTEHRTNH. The segment at 99–126 is disordered; that stretch reads CPADGDDDPGLSWVASSPSSKDVASPSQ. Residues 112–126 show a composition bias toward low complexity; sequence VASSPSSKDVASPSQ. 4 consecutive C2H2-type zinc fingers follow at residues 150 to 172, 178 to 200, 206 to 228, and 234 to 256; these read YPCQ…EQIH, FKCT…VKLH, YSCQ…LKTH, and FKCS…MQAH. Residues 250-280 form a disordered region; it reads QSHMQAHRKNKEHLAKKDQGKRDGSSSDVTE. The segment covering 261 to 274 has biased composition (basic and acidic residues); that stretch reads EHLAKKDQGKRDGS. 3 consecutive C2H2-type zinc fingers follow at residues 286–309, 318–341, and 346–368; these read YMCD…LTQH, LQCI…DRTH, and HKCP…LDSH. The interval 366–429 is disordered; the sequence is DSHRQPDSSN…LAPSSDHDDG (64 aa). Residues 386 to 400 are compositionally biased toward low complexity; the sequence is SVASMSSATPDSSAS. A C2H2-type 9; degenerate zinc finger spans residues 437 to 461; sequence YSCPYCSKRDFNSLAVLEIHLKTIH. C2H2-type zinc fingers lie at residues 469–492, 513–536, and 555–578; these read HTCQ…RKAH, FHCN…RVSH, and FFCN…QQTH. A C2H2-type 13; atypical zinc finger spans residues 603 to 628; it reads YSCPYCTNSPIFGSLLKLTKHIKENH. C2H2-type zinc fingers lie at residues 675-697, 705-728, 736-759, 764-787, 794-817, 831-853, and 857-880; these read YPCN…LKSH, QSCP…LTIH, YVCE…LDMH, YHCT…AVKH, YRCT…KHSH, RKCI…ITTH, and YNCR…REKH. Positions 885-895 are enriched in gly residues; it reads GGNGNGNGGSQ. The disordered stretch occupies residues 885 to 916; sequence GGNGNGNGGSQNGTPNGVTQSSKRSTAGSTAA. The segment covering 902–913 has biased composition (polar residues); the sequence is VTQSSKRSTAGS. The C2H2-type 21; degenerate zinc finger occupies 954–976; the sequence is YACDICGAAYTMESLLQNHRLRD. 8 C2H2-type zinc fingers span residues 1000 to 1022, 1029 to 1051, 1090 to 1112, 1201 to 1224, 1249 to 1271, 1279 to 1301, 1310 to 1333, and 1340 to 1363; these read HKCN…AQTH, YMCP…KVTH, FRCV…GTFH, LRCS…QVDH, YQCI…VANH, HECK…LIEH, FKCP…FAVH, and YDCS…LSQH.

Belongs to the krueppel C2H2-type zinc-finger protein family.

It localises to the nucleus. Functionally, transcription factor that can both act as an activator or a repressor depending on the context. Plays a central role in BMP signaling and olfactory neurogenesis. Associates with SMADs in response to bmp2 leading to activate transcription of BMP target genes. Acts as a transcriptional repressor involved in terminal olfactory receptor neurons differentiation. Involved in olfactory neurogenesis by participating in a developmental switch that regulates the transition from differentiation to maturation in olfactory receptor neurons. The polypeptide is Zinc finger protein 423 (znf423) (Danio rerio (Zebrafish)).